A 518-amino-acid polypeptide reads, in one-letter code: Lysine--tRNA ligase (518 aa).

Residues E407 and E414 each coordinate Mg(2+).

The protein belongs to the class-II aminoacyl-tRNA synthetase family. Homodimer. It depends on Mg(2+) as a cofactor.

The protein localises to the cytoplasm. It carries out the reaction tRNA(Lys) + L-lysine + ATP = L-lysyl-tRNA(Lys) + AMP + diphosphate. The chain is Lysine--tRNA ligase from Helicobacter hepaticus (strain ATCC 51449 / 3B1).